Consider the following 643-residue polypeptide: Probable extracellular metalloproteinase 4 (643 aa).

An N-terminal signal peptide occupies residues 1-18 (MHGLLLAGLLALPLNVLA). Residues 19-254 (HPTESHSSGV…VHSVVDYVSA (236 aa)) constitute a propeptide that is removed on maturation. Residues 47 to 57 (TKSDAVPKQDG) show a composition bias toward basic and acidic residues. The disordered stretch occupies residues 47-69 (TKSDAVPKQDGESFTTSSTGDDN). The span at 58 to 69 (ESFTTSSTGDDN) shows a compositional bias: polar residues. N-linked (GlcNAc...) asparagine glycans are attached at residues asparagine 271 and asparagine 420. A Zn(2+)-binding site is contributed by histidine 437. The active site involves glutamate 438. Residue histidine 441 participates in Zn(2+) binding. N-linked (GlcNAc...) asparagine glycans are attached at residues asparagine 603 and asparagine 629.

This sequence belongs to the peptidase M36 family. It depends on Zn(2+) as a cofactor.

Its subcellular location is the secreted. Functionally, secreted metalloproteinase probably acting as a virulence factor. The chain is Probable extracellular metalloproteinase 4 (MEP4) from Arthroderma benhamiae (strain ATCC MYA-4681 / CBS 112371) (Trichophyton mentagrophytes).